The following is a 181-amino-acid chain: Probable pyruvoyl-dependent arginine decarboxylase (181 aa).

The residue at position 43 (Ser-43) is a Pyruvic acid (Ser).

This sequence belongs to the PdaD family. The cofactor is pyruvate.

It catalyses the reaction L-arginine + H(+) = agmatine + CO2. The sequence is that of Probable pyruvoyl-dependent arginine decarboxylase from Chlorobaculum parvum (strain DSM 263 / NCIMB 8327) (Chlorobium vibrioforme subsp. thiosulfatophilum).